The chain runs to 282 residues: Ribosomal RNA small subunit methyltransferase A (282 aa).

Positions 1–21 are disordered; the sequence is MPDFPKEHATPMSNRPPAHQA. The S-adenosyl-L-methionine site is built by Asn28, Leu30, Gly55, Glu76, Asp101, and Asn126.

The protein belongs to the class I-like SAM-binding methyltransferase superfamily. rRNA adenine N(6)-methyltransferase family. RsmA subfamily.

The protein resides in the cytoplasm. The enzyme catalyses adenosine(1518)/adenosine(1519) in 16S rRNA + 4 S-adenosyl-L-methionine = N(6)-dimethyladenosine(1518)/N(6)-dimethyladenosine(1519) in 16S rRNA + 4 S-adenosyl-L-homocysteine + 4 H(+). In terms of biological role, specifically dimethylates two adjacent adenosines (A1518 and A1519) in the loop of a conserved hairpin near the 3'-end of 16S rRNA in the 30S particle. May play a critical role in biogenesis of 30S subunits. This chain is Ribosomal RNA small subunit methyltransferase A, found in Chromohalobacter salexigens (strain ATCC BAA-138 / DSM 3043 / CIP 106854 / NCIMB 13768 / 1H11).